Consider the following 141-residue polypeptide: Hemoglobin subunit alpha-A (141 aa).

The Globin domain maps to 1–141; the sequence is VLNAGDKANV…VGTVLTSKYR (141 aa). Position 58 (H58) interacts with O2. H87 lines the heme b pocket.

It belongs to the globin family. Heterotetramer of two alpha chains and two beta chains. As to expression, red blood cells.

Involved in oxygen transport from the lung to the various peripheral tissues. The protein is Hemoglobin subunit alpha-A (HBAA) of Chrysemys picta bellii (Western painted turtle).